The chain runs to 386 residues: Succinate--CoA ligase [ADP-forming] subunit beta (386 aa).

The 236-residue stretch at 9-244 (KQVLRSSNLN…DSQIDAKEAA (236 aa)) folds into the ATP-grasp domain. Residues Lys-46, 53 to 55 (GRG), Glu-99, Leu-102, and Glu-107 each bind ATP. Mg(2+) is bound by residues Asn-199 and Asp-213. Residues Asn-264 and 321-323 (GIV) each bind substrate.

It belongs to the succinate/malate CoA ligase beta subunit family. In terms of assembly, heterotetramer of two alpha and two beta subunits. The cofactor is Mg(2+).

The enzyme catalyses succinate + ATP + CoA = succinyl-CoA + ADP + phosphate. The catalysed reaction is GTP + succinate + CoA = succinyl-CoA + GDP + phosphate. It functions in the pathway carbohydrate metabolism; tricarboxylic acid cycle; succinate from succinyl-CoA (ligase route): step 1/1. Succinyl-CoA synthetase functions in the citric acid cycle (TCA), coupling the hydrolysis of succinyl-CoA to the synthesis of either ATP or GTP and thus represents the only step of substrate-level phosphorylation in the TCA. The beta subunit provides nucleotide specificity of the enzyme and binds the substrate succinate, while the binding sites for coenzyme A and phosphate are found in the alpha subunit. This chain is Succinate--CoA ligase [ADP-forming] subunit beta, found in Thiobacillus denitrificans (strain ATCC 25259 / T1).